The primary structure comprises 510 residues: Aromatic-L-amino-acid decarboxylase (510 aa).

Positions 1–17 (MSHIPISNTIPPKQTDG) are enriched in polar residues. Residues 1–29 (MSHIPISNTIPPKQTDGNGKANISPDKLD) are disordered. Residue Thr117 coordinates substrate. 5 residues coordinate pyridoxal 5'-phosphate: Ala183, Ser184, His227, Asp305, and Asn334. His227 serves as a coordination point for substrate. Lys337 is subject to N6-(pyridoxal phosphate)lysine. The segment at 358–384 (NAFNVDPLYLKHDMQGSAPDYRHWQIP) is disordered.

This sequence belongs to the group II decarboxylase family. As to quaternary structure, homodimer. The cofactor is pyridoxal 5'-phosphate.

It catalyses the reaction L-dopa + H(+) = dopamine + CO2. The enzyme catalyses 5-hydroxy-L-tryptophan + H(+) = serotonin + CO2. In terms of biological role, catalyzes the decarboxylation of L-3,4-dihydroxyphenylalanine (L-DOPA) to dopamine and L-5-hydroxytryptophan (5-HTP) to serotonin. Catalyzes the formation of serotonin more efficiently than dopamine. Displays no activity to tyrosine. Variation in the synthesis of bioamines may be a factor contributing to natural variation in life span. The chain is Aromatic-L-amino-acid decarboxylase (Ddc) from Drosophila simulans (Fruit fly).